Reading from the N-terminus, the 616-residue chain is Glycogenin-1 (616 aa).

Leucine 10, tyrosine 16, and arginine 95 together coordinate UDP. Residues leucine 10, tyrosine 16, arginine 95, lysine 104, aspartate 120, aspartate 122, asparagine 158, serine 159, aspartate 185, aspartate 188, and glutamine 189 each coordinate UDP-alpha-D-glucose. Residues aspartate 120 and aspartate 122 each coordinate UDP. Aspartate 120 and aspartate 122 together coordinate Mn(2+). Tyrosine 230 carries O-linked (Glc...) tyrosine glycosylation. UDP is bound by residues histidine 247, glycine 250, and lysine 253. Histidine 247 lines the Mn(2+) pocket. 2 residues coordinate UDP-alpha-D-glucose: glycine 250 and lysine 253. Residues 283–302 (HQLNNEVSKPKISDSDKTET) are compositionally biased toward basic and acidic residues. 3 disordered regions span residues 283-320 (HQLNNEVSKPKISDSDKTETPETITPVDAPPSNEPTTN), 335-354 (NQNAEPVPNSDHSPAPNPVP), and 371-516 (TNQP…SVDD). Over residues 377–386 (ESREYSKEND) the composition is skewed to basic and acidic residues. Residues 400–419 (SPPNSTQEPNSSYSVVSTQA) are compositionally biased toward polar residues. The span at 450–461 (STAASSNNNVSN) shows a compositional bias: low complexity. Polar residues-rich tracts occupy residues 462–485 (QPDNKNFSNSKENNISVEPSPSNP) and 492–503 (DNIQKPSVSTND). Tyrosine 598 carries an O-linked (Glc...) tyrosine glycan.

Belongs to the glycosyltransferase 8 family. Glycogenin subfamily. The cofactor is Mn(2+).

Its subcellular location is the cytoplasm. It localises to the vacuole. It catalyses the reaction L-tyrosyl-[glycogenin] + UDP-alpha-D-glucose = alpha-D-glucosyl-L-tyrosyl-[glycogenin] + UDP + H(+). It carries out the reaction [1,4-alpha-D-glucosyl](n)-L-tyrosyl-[glycogenin] + UDP-alpha-D-glucose = [1,4-alpha-D-glucosyl](n+1)-L-tyrosyl-[glycogenin] + UDP + H(+). In terms of biological role, self-glucosylating initiator of glycogen synthesis. It catalyzes the formation of a short alpha (1,4)-glucosyl chain covalently attached via a glucose 1-O-tyrosyl linkage to internal tyrosine residues and these chains act as primers for the elongation reaction catalyzed by glycogen synthase. Capable of transferring glucosyl residues to unbound acceptors such as free oligoglucans or oligoglucan derivatives. The polypeptide is Glycogenin-1 (GLG1) (Saccharomyces cerevisiae (strain YJM789) (Baker's yeast)).